Here is a 248-residue protein sequence, read N- to C-terminus: 2-acetamido-2-deoxy-D-galactose-binding seed lectin 2 (248 aa).

N119 carries an N-linked (GlcNAc...) asparagine; partial glycan. Residues E128 and D130 each coordinate Mn(2+). 4 residues coordinate Ca(2+): D130, Y132, N134, and D138. Mn(2+)-binding residues include D138 and H144.

It belongs to the leguminous lectin family.

The polypeptide is 2-acetamido-2-deoxy-D-galactose-binding seed lectin 2 (Cytisus scoparius (Scotch broom)).